The chain runs to 130 residues: UPF0212 protein PF1486 (130 aa).

It belongs to the UPF0212 family.

The chain is UPF0212 protein PF1486 from Pyrococcus furiosus (strain ATCC 43587 / DSM 3638 / JCM 8422 / Vc1).